The chain runs to 304 residues: Acetyl-coenzyme A carboxylase carboxyl transferase subunit beta (304 aa).

A CoA carboxyltransferase N-terminal domain is found at 23–292 (VWTKCDSCGQ…PNPEAPREGV (270 aa)). Zn(2+) is bound by residues Cys27, Cys30, Cys46, and Cys49. The segment at 27-49 (CDSCGQVLYRAELERNLEVCPKC) adopts a C4-type zinc-finger fold. A disordered region spans residues 285-304 (PEAPREGVVVPPVPDQEPEA). A compositionally biased stretch (pro residues) spans 295 to 304 (PPVPDQEPEA).

The protein belongs to the AccD/PCCB family. As to quaternary structure, acetyl-CoA carboxylase is a heterohexamer composed of biotin carboxyl carrier protein (AccB), biotin carboxylase (AccC) and two subunits each of ACCase subunit alpha (AccA) and ACCase subunit beta (AccD). Zn(2+) is required as a cofactor.

It is found in the cytoplasm. The catalysed reaction is N(6)-carboxybiotinyl-L-lysyl-[protein] + acetyl-CoA = N(6)-biotinyl-L-lysyl-[protein] + malonyl-CoA. It participates in lipid metabolism; malonyl-CoA biosynthesis; malonyl-CoA from acetyl-CoA: step 1/1. Functionally, component of the acetyl coenzyme A carboxylase (ACC) complex. Biotin carboxylase (BC) catalyzes the carboxylation of biotin on its carrier protein (BCCP) and then the CO(2) group is transferred by the transcarboxylase to acetyl-CoA to form malonyl-CoA. This chain is Acetyl-coenzyme A carboxylase carboxyl transferase subunit beta, found in Shigella sonnei (strain Ss046).